The primary structure comprises 227 residues: Phosphoribosylformylglycinamidine synthase subunit PurQ (227 aa).

The 226-residue stretch at arginine 2 to arginine 227 folds into the Glutamine amidotransferase type-1 domain. Cysteine 85 (nucleophile) is an active-site residue. Residues histidine 200 and glutamate 202 contribute to the active site.

As to quaternary structure, part of the FGAM synthase complex composed of 1 PurL, 1 PurQ and 2 PurS subunits.

It is found in the cytoplasm. The enzyme catalyses N(2)-formyl-N(1)-(5-phospho-beta-D-ribosyl)glycinamide + L-glutamine + ATP + H2O = 2-formamido-N(1)-(5-O-phospho-beta-D-ribosyl)acetamidine + L-glutamate + ADP + phosphate + H(+). The catalysed reaction is L-glutamine + H2O = L-glutamate + NH4(+). It participates in purine metabolism; IMP biosynthesis via de novo pathway; 5-amino-1-(5-phospho-D-ribosyl)imidazole from N(2)-formyl-N(1)-(5-phospho-D-ribosyl)glycinamide: step 1/2. Its function is as follows. Part of the phosphoribosylformylglycinamidine synthase complex involved in the purines biosynthetic pathway. Catalyzes the ATP-dependent conversion of formylglycinamide ribonucleotide (FGAR) and glutamine to yield formylglycinamidine ribonucleotide (FGAM) and glutamate. The FGAM synthase complex is composed of three subunits. PurQ produces an ammonia molecule by converting glutamine to glutamate. PurL transfers the ammonia molecule to FGAR to form FGAM in an ATP-dependent manner. PurS interacts with PurQ and PurL and is thought to assist in the transfer of the ammonia molecule from PurQ to PurL. The chain is Phosphoribosylformylglycinamidine synthase subunit PurQ from Thermus thermophilus (strain ATCC BAA-163 / DSM 7039 / HB27).